We begin with the raw amino-acid sequence, 101 residues long: UPF0134 protein MPN_675 (101 aa).

It belongs to the UPF0134 family.

This Mycoplasma pneumoniae (strain ATCC 29342 / M129 / Subtype 1) (Mycoplasmoides pneumoniae) protein is UPF0134 protein MPN_675.